The sequence spans 40 residues: MADTTGRIPLWLIGTVTGIPVIGSMGIFFYGSYSGLGSSL.

The chain crosses the membrane as a helical span at residues 8 to 28 (IPLWLIGTVTGIPVIGSMGIF).

The protein belongs to the PsbJ family. PSII is composed of 1 copy each of membrane proteins PsbA, PsbB, PsbC, PsbD, PsbE, PsbF, PsbH, PsbI, PsbJ, PsbK, PsbL, PsbM, PsbT, PsbX, PsbY, PsbZ, Psb30/Ycf12, at least 3 peripheral proteins of the oxygen-evolving complex and a large number of cofactors. It forms dimeric complexes.

It localises to the plastid. The protein resides in the chloroplast thylakoid membrane. Its function is as follows. One of the components of the core complex of photosystem II (PSII). PSII is a light-driven water:plastoquinone oxidoreductase that uses light energy to abstract electrons from H(2)O, generating O(2) and a proton gradient subsequently used for ATP formation. It consists of a core antenna complex that captures photons, and an electron transfer chain that converts photonic excitation into a charge separation. In Illicium oligandrum (Star anise), this protein is Photosystem II reaction center protein J.